The primary structure comprises 107 residues: Ig kappa chain V-VI region NQ5-78.2.6 (107 aa).

The interval 1–23 is framework-1; it reads QILLTQSPAIMSASPGQKVTMTC. A disulfide bond links C23 and C87. The interval 24-33 is complementarity-determining-1; sequence SASSSVSYMH. A framework-2 region spans residues 34-48; the sequence is WYQQKSGTSPKRWIY. Residues 49 to 55 are complementarity-determining-2; sequence DTSKLAS. Residues 56–87 form a framework-3 region; it reads GVPARFXGSGSATSYSLTITSMQAEDAATYYC. The interval 88–96 is complementarity-determining-3; it reads QQWSSNPLT. The segment at 97 to 106 is framework-4; it reads FGSGTKLEXK.

In terms of biological role, anti-2-phenyl oxazolone (PHOX) Antibody. This chain is Ig kappa chain V-VI region NQ5-78.2.6, found in Mus musculus (Mouse).